The chain runs to 101 residues: Small ribosomal subunit protein uS14 (101 aa).

Positions Leu48 to Arg69 are disordered. The span at Leu51 to Gly68 shows a compositional bias: basic and acidic residues.

Belongs to the universal ribosomal protein uS14 family. Part of the 30S ribosomal subunit. Contacts proteins S3 and S10.

Binds 16S rRNA, required for the assembly of 30S particles and may also be responsible for determining the conformation of the 16S rRNA at the A site. This Stenotrophomonas maltophilia (strain R551-3) protein is Small ribosomal subunit protein uS14.